Consider the following 188-residue polypeptide: Translation machinery-associated protein 22 (188 aa).

Residues 96–167 form the SUI1 domain; it reads VVIKRIERSK…GVEELITQML (72 aa).

This sequence belongs to the DENR family. In terms of assembly, interacts with the 40S ribosomal subunit.

It localises to the cytoplasm. The sequence is that of Translation machinery-associated protein 22 (TMA22) from Yarrowia lipolytica (strain CLIB 122 / E 150) (Yeast).